The sequence spans 95 residues: Large ribosomal subunit protein uL23 (95 aa).

The protein belongs to the universal ribosomal protein uL23 family. As to quaternary structure, part of the 50S ribosomal subunit. Contacts protein L29, and trigger factor when it is bound to the ribosome.

Its function is as follows. One of the early assembly proteins it binds 23S rRNA. One of the proteins that surrounds the polypeptide exit tunnel on the outside of the ribosome. Forms the main docking site for trigger factor binding to the ribosome. The chain is Large ribosomal subunit protein uL23 from Fusobacterium nucleatum subsp. nucleatum (strain ATCC 25586 / DSM 15643 / BCRC 10681 / CIP 101130 / JCM 8532 / KCTC 2640 / LMG 13131 / VPI 4355).